Here is a 2192-residue protein sequence, read N- to C-terminus: BEACH domain-containing protein lvsE (2192 aa).

4 disordered regions span residues 948–969, 996–1065, 1160–1303, and 1343–1363; these read STSLSTSSITPPPPNSRNTSTG, TTTT…DEPE, NESQ…NNLS, and DENGVDVSSPNSSSLSSSSSN. Low complexity predominate over residues 996 to 1049; that stretch reads TTTTTTTTTTTTTTSTTSNTGNDSPLSIESPISSPVLIENTTNTTNTTTTNTTN. Polar residues predominate over residues 1171 to 1187; sequence NIDNLNPNTGLPYNKST. Low complexity predominate over residues 1188–1231; the sequence is NNLSNVNNVNNNNNNNSNNINVSGNNTIGPSSSKSPLRNSRSMS. Residues 1232-1243 show a composition bias toward polar residues; sequence IGSSATKSPSRQ. Low complexity-rich tracts occupy residues 1253 to 1303 and 1350 to 1363; these read NNNS…NNLS and SSPNSSSLSSSSSN. The BEACH-type PH domain occupies 1366–1491; sequence IEEEKFIGSW…ESIQIFNKIV (126 aa). The 292-residue stretch at 1504 to 1795 folds into the BEACH domain; the sequence is DHPSKIIKKS…QLFSKPHPIR (292 aa). Residues 1823 to 1849 show a composition bias toward low complexity; sequence GTINSSFSSTSTSTSTSSPPPSTLNSP. Residues 1823 to 1851 are disordered; that stretch reads GTINSSFSSTSTSTSTSSPPPSTLNSPQG. WD repeat units lie at residues 1973–2012, 2022–2061, and 2156–2192; these read FHHDMVTCISLGSNGKHFATASSDTTILVWNDVDHLIKDS, SHDEPVHCLDINEEWDLIASGSMDKKLILHSLGKGHYQRS, and DSPAAIKTIELVAHEKYMLIGLNDGNLVIIPFDVKDL.

The polypeptide is BEACH domain-containing protein lvsE (lvsE) (Dictyostelium discoideum (Social amoeba)).